A 233-amino-acid chain; its full sequence is MLVVAVRFSIIWDILFMSDSKLATKRKLKQEEAKGQYYRFNHPSDHRHWVKVMPGGVYATSDQEIIHTGLGSCVSACAWDIEMKVGGMNHFLLPFNNQFESQHWHPQALLSDSSRYGCYAMEVLINRLLSMGAERERLKFKLFGGAHLMGYQSLVGEKNVEFVLEYAKREKLNVVAQDLGGAQPRKLLFDPQTGQAWVKRIGFSSAHAIKQDEELYQHSIDKQIPSDDVELFQ.

The protein belongs to the CheD family.

The enzyme catalyses L-glutaminyl-[protein] + H2O = L-glutamyl-[protein] + NH4(+). Its function is as follows. Probably deamidates glutamine residues to glutamate on methyl-accepting chemotaxis receptors (MCPs), playing an important role in chemotaxis. The polypeptide is Probable chemoreceptor glutamine deamidase CheD (Vibrio cholerae serotype O1 (strain ATCC 39315 / El Tor Inaba N16961)).